The sequence spans 70 residues: Small ribosomal subunit protein bS21 (70 aa).

Belongs to the bacterial ribosomal protein bS21 family.

The sequence is that of Small ribosomal subunit protein bS21 from Herminiimonas arsenicoxydans.